Here is a 618-residue protein sequence, read N- to C-terminus: Origin recognition complex subunit 2 (618 aa).

Disordered regions lie at residues 1–116 (MSAS…AAKD) and 149–274 (NATP…KKSN). A Phosphothreonine modification is found at Thr24. 2 positions are modified to phosphoserine: Ser26 and Ser30. Residues 49–59 (TSRRSTRRPSP) show a composition bias toward basic residues. A compositionally biased stretch (basic and acidic residues) spans 70-79 (SNGKGQEERI). 3 positions are modified to phosphoserine: Ser87, Ser91, and Ser92. A compositionally biased stretch (acidic residues) spans 94–107 (AEDQEEEESIEESE). 7 positions are modified to phosphothreonine: Thr151, Thr154, Thr157, Thr160, Thr167, Thr170, and Thr181. The segment covering 151–161 (TPCTPKTPKTP) has biased composition (low complexity). Over residues 183-193 (AHVRTRVKKQI) the composition is skewed to basic residues. Residues 199 to 208 (DSDEDFSGDE) are compositionally biased toward acidic residues. The segment covering 219-233 (SSSSSSSDAGNSSDN) has biased composition (low complexity). Thr258 carries the phosphothreonine modification. At Ser260 the chain carries Phosphoserine.

It belongs to the ORC2 family. ORC is composed of six subunits. Interacts with Mcm10. Interacts with CG9890. Interaction between the TREX-2/AMEX complex and the ORC complex is required for ORC localization to mRNPs, and consequently mRNA export.

The protein localises to the nucleus. Its subcellular location is the chromosome. It is found in the centromere. In terms of biological role, component of the origin recognition complex (ORC) that binds origins of replication. DNA-binding is ATP-dependent, however specific DNA sequences that define origins of replication have not been identified so far. ORC is required to assemble the pre-replication complex necessary to initiate DNA replication. As part of the ORC complex, might also have a role in mRNA export. The polypeptide is Origin recognition complex subunit 2 (Orc2) (Drosophila melanogaster (Fruit fly)).